The following is a 371-amino-acid chain: Putative glutamate--cysteine ligase 2 (371 aa).

This sequence belongs to the glutamate--cysteine ligase type 2 family. YbdK subfamily.

It carries out the reaction L-cysteine + L-glutamate + ATP = gamma-L-glutamyl-L-cysteine + ADP + phosphate + H(+). ATP-dependent carboxylate-amine ligase which exhibits weak glutamate--cysteine ligase activity. The chain is Putative glutamate--cysteine ligase 2 from Cupriavidus taiwanensis (strain DSM 17343 / BCRC 17206 / CCUG 44338 / CIP 107171 / LMG 19424 / R1) (Ralstonia taiwanensis (strain LMG 19424)).